Reading from the N-terminus, the 384-residue chain is Succinyl-diaminopimelate desuccinylase (384 aa).

His-71 lines the Zn(2+) pocket. The active site involves Asp-73. Position 104 (Asp-104) interacts with Zn(2+). Glu-138 functions as the Proton acceptor in the catalytic mechanism. Glu-139, Glu-167, and His-353 together coordinate Zn(2+).

It belongs to the peptidase M20A family. DapE subfamily. Homodimer. The cofactor is Zn(2+). Co(2+) serves as cofactor.

It carries out the reaction N-succinyl-(2S,6S)-2,6-diaminopimelate + H2O = (2S,6S)-2,6-diaminopimelate + succinate. Its pathway is amino-acid biosynthesis; L-lysine biosynthesis via DAP pathway; LL-2,6-diaminopimelate from (S)-tetrahydrodipicolinate (succinylase route): step 3/3. Functionally, catalyzes the hydrolysis of N-succinyl-L,L-diaminopimelic acid (SDAP), forming succinate and LL-2,6-diaminopimelate (DAP), an intermediate involved in the bacterial biosynthesis of lysine and meso-diaminopimelic acid, an essential component of bacterial cell walls. The chain is Succinyl-diaminopimelate desuccinylase from Aromatoleum aromaticum (strain DSM 19018 / LMG 30748 / EbN1) (Azoarcus sp. (strain EbN1)).